The chain runs to 311 residues: Aspartate carbamoyltransferase catalytic subunit (311 aa).

The carbamoyl phosphate site is built by R55 and T56. Position 85 (K85) interacts with L-aspartate. Carbamoyl phosphate contacts are provided by R106, H135, and Q138. Residues R168 and R230 each coordinate L-aspartate. L268 and P269 together coordinate carbamoyl phosphate.

It belongs to the aspartate/ornithine carbamoyltransferase superfamily. ATCase family. As to quaternary structure, heterododecamer (2C3:3R2) of six catalytic PyrB chains organized as two trimers (C3), and six regulatory PyrI chains organized as three dimers (R2).

The enzyme catalyses carbamoyl phosphate + L-aspartate = N-carbamoyl-L-aspartate + phosphate + H(+). The protein operates within pyrimidine metabolism; UMP biosynthesis via de novo pathway; (S)-dihydroorotate from bicarbonate: step 2/3. Catalyzes the condensation of carbamoyl phosphate and aspartate to form carbamoyl aspartate and inorganic phosphate, the committed step in the de novo pyrimidine nucleotide biosynthesis pathway. This chain is Aspartate carbamoyltransferase catalytic subunit, found in Yersinia pseudotuberculosis serotype O:1b (strain IP 31758).